The primary structure comprises 574 residues: Sorting nexin-33 (574 aa).

An SH3 domain is found at Met1 to Pro61. Residue Ser77 is modified to Phosphoserine. Residues Gly79–Met90 are compositionally biased toward polar residues. The disordered stretch occupies residues Gly79–Asp116. Ser92 is modified (phosphoserine). The region spanning Phe230–Gln340 is the PX domain. A BAR domain is found at Leu371 to Leu574.

The protein belongs to the sorting nexin family. In terms of assembly, homodimer (via BAR domain). Interacts with ADAM15. Interacts with FASLG. Interacts (via SH3 domain) with DNM1 and DNM2. Interacts with WASL. Interacts with FCHSD1 (via the F-BAR domain). Post-translationally, phosphorylated. Detected in brain (at protein level).

It localises to the cytoplasm. Its subcellular location is the cytosol. The protein resides in the membrane. The protein localises to the cytoplasmic vesicle membrane. In terms of biological role, plays a role in the reorganization of the cytoskeleton, endocytosis and cellular vesicle trafficking via its interactions with membranes, WASL, DNM1 and DNM2. Acts both during interphase and at the end of mitotic cell divisions. Required for efficient progress through mitosis and cytokinesis. Required for normal formation of the cleavage furrow at the end of mitosis. Modulates endocytosis of cell-surface proteins, such as APP and PRNP; this then modulates the secretion of APP and PRNP peptides. Promotes membrane tubulation (in vitro). May promote the formation of macropinosomes. The chain is Sorting nexin-33 (Snx33) from Mus musculus (Mouse).